We begin with the raw amino-acid sequence, 370 residues long: GTPase Obg (370 aa).

The Obg domain maps to 1 to 159; sequence MKFIDEARIE…RMLRLELKVL (159 aa). A disordered region spans residues 127–146; the sequence is NLHFKSSTNRAPRQKTDGKP. Residues 160-334 enclose the OBG-type G domain; the sequence is ADVGLLGMPN…LCYAIYDYLA (175 aa). Residues 166–173, 191–195, 213–216, 284–287, and 315–317 contribute to the GTP site; these read GMPNAGKS, FTTLA, DIPG, NKLD, and SAL. Positions 173 and 193 each coordinate Mg(2+). The interval 350-370 is disordered; that stretch reads ADVRFRDAPPSDGGATSGGDA.

It belongs to the TRAFAC class OBG-HflX-like GTPase superfamily. OBG GTPase family. In terms of assembly, monomer. It depends on Mg(2+) as a cofactor.

It is found in the cytoplasm. An essential GTPase which binds GTP, GDP and possibly (p)ppGpp with moderate affinity, with high nucleotide exchange rates and a fairly low GTP hydrolysis rate. Plays a role in control of the cell cycle, stress response, ribosome biogenesis and in those bacteria that undergo differentiation, in morphogenesis control. This Burkholderia vietnamiensis (strain G4 / LMG 22486) (Burkholderia cepacia (strain R1808)) protein is GTPase Obg.